We begin with the raw amino-acid sequence, 111 residues long: Nucleoid-associated protein Ppha_1174 (111 aa).

It belongs to the YbaB/EbfC family. Homodimer.

The protein resides in the cytoplasm. It localises to the nucleoid. Binds to DNA and alters its conformation. May be involved in regulation of gene expression, nucleoid organization and DNA protection. In Pelodictyon phaeoclathratiforme (strain DSM 5477 / BU-1), this protein is Nucleoid-associated protein Ppha_1174.